The chain runs to 462 residues: MPLLLLSALLPFSLMAGPTPSTGKELSAASFLQDILQRYGENESLSMPQLQSLLENLEVGKGGGNQRNMSQCLSSSTLFAAHNLTSGSVVDAEGFQSFCPTILQQLETRACQESPAFQNETTPGAEGRPSPGEVWGYGFLCVTVISLCSLFGAGVVPFMKKACYKRLLLFCIALAIGTLFSNALFQLIPEAFGFNPLEDSYVFTSSVIFGGFYLFFFTEKVLKMMLKQKHEHGHSHYSADTSKRDAEEGVTEKLQNGDLDHMIPPPHGSESDLRGDEKAVQQQDLPGQQSSCYWLKGIRYSDIGTLAWMITLSDGLHNFIDGLAIGASFTVSVFQGVSTSIAILCEEFPHELGDFVILLNAGMSIPQALFFNFLSACCCYLGLAFGILAGSHFSSNWIFALAGGMFLYIALSDMFPEMNEVSKEDEEGGRAFSAFMIQNAGLLTGFAIMLLLTTFSGQIQLG.

An N-terminal signal peptide occupies residues 1-16; that stretch reads MPLLLLSALLPFSLMA. Topologically, residues 17-138 are extracellular; that stretch reads GPTPSTGKEL…PSPGEVWGYG (122 aa). Residues N42, N68, N83, and N119 are each glycosylated (N-linked (GlcNAc...) asparagine). Residues 139–159 form a helical membrane-spanning segment; that stretch reads FLCVTVISLCSLFGAGVVPFM. The Cytoplasmic segment spans residues 160–167; the sequence is KKACYKRL. A helical membrane pass occupies residues 168–188; the sequence is LLFCIALAIGTLFSNALFQLI. At 189-201 the chain is on the extracellular side; that stretch reads PEAFGFNPLEDSY. The helical transmembrane segment at 202 to 222 threads the bilayer; the sequence is VFTSSVIFGGFYLFFFTEKVL. Topologically, residues 223-322 are cytoplasmic; it reads KMMLKQKHEH…SDGLHNFIDG (100 aa). The HHHGHXHX-motif motif lies at 230-237; it reads HEHGHSHY. A disordered region spans residues 235–285; it reads SHYSADTSKRDAEEGVTEKLQNGDLDHMIPPPHGSESDLRGDEKAVQQQDL. Basic and acidic residues-rich tracts occupy residues 241 to 251 and 269 to 279; these read TSKRDAEEGVT and SESDLRGDEKA. A helical membrane pass occupies residues 323-343; sequence LAIGASFTVSVFQGVSTSIAI. The Extracellular portion of the chain corresponds to 344-367; that stretch reads LCEEFPHELGDFVILLNAGMSIPQ. An XEXPHE-motif motif is present at residues 346-351; that stretch reads EEFPHE. The helical transmembrane segment at 368–388 threads the bilayer; sequence ALFFNFLSACCCYLGLAFGIL. Topologically, residues 389 to 396 are cytoplasmic; sequence AGSHFSSN. The chain crosses the membrane as a helical span at residues 397–417; that stretch reads WIFALAGGMFLYIALSDMFPE. Residues 418-431 lie on the Extracellular side of the membrane; sequence MNEVSKEDEEGGRA. The helical transmembrane segment at 432-452 threads the bilayer; that stretch reads FSAFMIQNAGLLTGFAIMLLL. Over 453–462 the chain is Cytoplasmic; that stretch reads TTFSGQIQLG.

The protein belongs to the ZIP transporter (TC 2.A.5) family. In terms of assembly, homotrimer.

The protein resides in the cell membrane. It localises to the apical cell membrane. Its subcellular location is the basolateral cell membrane. The protein localises to the early endosome membrane. It is found in the late endosome membrane. The protein resides in the lysosome membrane. The catalysed reaction is Zn(2+)(out) + 2 hydrogencarbonate(out) = Zn(2+)(in) + 2 hydrogencarbonate(in). It catalyses the reaction Mn(2+)(out) + 2 hydrogencarbonate(out) = Mn(2+)(in) + 2 hydrogencarbonate(in). It carries out the reaction Fe(2+)(out) + 2 hydrogencarbonate(out) = Fe(2+)(in) + 2 hydrogencarbonate(in). The enzyme catalyses Cd(2+)(out) + 2 hydrogencarbonate(out) = Cd(2+)(in) + 2 hydrogencarbonate(in). In terms of biological role, electroneutral transporter of the plasma membrane mediating the cellular uptake of the divalent metal cations zinc, manganese and iron that are important for tissue homeostasis, metabolism, development and immunity. Functions as an energy-dependent symporter, transporting through the membranes an electroneutral complex composed of a divalent metal cation and two bicarbonate anions. Beside these endogenous cellular substrates, can also import cadmium a non-essential metal which is cytotoxic and carcinogenic. This is Metal cation symporter ZIP14 from Xenopus tropicalis (Western clawed frog).